Here is a 454-residue protein sequence, read N- to C-terminus: Glutamine synthetase (454 aa).

The GS beta-grasp domain maps to 19–111 (NNVKFIRFQF…VICDVYKDEK (93 aa)). Positions 118-454 (PRSRLKAILE…DWETGKYLIY (337 aa)) constitute a GS catalytic domain. Mg(2+) contacts are provided by Glu-142 and Glu-144. Glu-194 contacts ATP. Mg(2+) is bound by residues Glu-199 and Glu-206. L-glutamate contacts are provided by residues 250–251 (NG) and Gly-251. His-255 is a binding site for Mg(2+). Residues 257-259 (HQS) and Ser-259 contribute to the ATP site. Residues Arg-309, Glu-315, and Arg-327 each contribute to the L-glutamate site. ATP contacts are provided by Arg-327, Arg-332, and Lys-339. Glu-344 contacts Mg(2+). Arg-346 serves as a coordination point for L-glutamate.

It belongs to the glutamine synthetase family. Oligomer of 12 subunits arranged in the form of two hexagons. Requires Mg(2+) as cofactor.

The protein localises to the cytoplasm. The catalysed reaction is L-glutamate + NH4(+) + ATP = L-glutamine + ADP + phosphate + H(+). Its activity is regulated as follows. Feedback inhibited by glycine and alanine, and inhibited by low concentrations of methionine sulfoximine. Probably involved in nitrogen metabolism via ammonium assimilation. Catalyzes the ATP-dependent biosynthesis of glutamine from glutamate and ammonia. Beta-glutamate is a much poorer substrate than alpha-glutamate. The protein is Glutamine synthetase of Methanocaldococcus jannaschii (strain ATCC 43067 / DSM 2661 / JAL-1 / JCM 10045 / NBRC 100440) (Methanococcus jannaschii).